Here is a 132-residue protein sequence, read N- to C-terminus: Transcriptional regulator MraZ (132 aa).

2 SpoVT-AbrB domains span residues 5–47 (TYEH…SKDD) and 76–119 (TVEI…SKNK).

The protein belongs to the MraZ family. As to quaternary structure, forms oligomers.

It is found in the cytoplasm. Its subcellular location is the nucleoid. The chain is Transcriptional regulator MraZ from Mycoplasma capricolum subsp. capricolum (strain California kid / ATCC 27343 / NCTC 10154).